Here is a 630-residue protein sequence, read N- to C-terminus: tRNA uridine 5-carboxymethylaminomethyl modification enzyme MnmG (630 aa).

FAD contacts are provided by residues glycine 14–glycine 19, valine 126, and serine 181. Glycine 273 to phenylalanine 287 contacts NAD(+). Residue glutamine 370 coordinates FAD.

The protein belongs to the MnmG family. Homodimer. Heterotetramer of two MnmE and two MnmG subunits. The cofactor is FAD.

It is found in the cytoplasm. Its function is as follows. NAD-binding protein involved in the addition of a carboxymethylaminomethyl (cmnm) group at the wobble position (U34) of certain tRNAs, forming tRNA-cmnm(5)s(2)U34. This Alkaliphilus metalliredigens (strain QYMF) protein is tRNA uridine 5-carboxymethylaminomethyl modification enzyme MnmG.